The following is a 91-amino-acid chain: MTEQKNKTSLIEFPCTFPLKVMGAVHPEFEQAVLDTVRLHAPDTQAHHITTRPSSKGNYTGATVQVKVENQEQLDNIYRALTSHELVKVVL.

It belongs to the UPF0250 family.

The chain is UPF0250 protein NMA1380 from Neisseria meningitidis serogroup A / serotype 4A (strain DSM 15465 / Z2491).